The primary structure comprises 536 residues: Methyl-accepting chemotaxis aspartate transducer (536 aa).

Residues 1-10 (MFNRIRISTS) lie on the Cytoplasmic side of the membrane. Residues 11-31 (LFLLLISFCIMQLISTGLSYV) form a helical membrane-spanning segment. Residues 32–188 (ALRADNHNLE…ASSQQAYGWS (157 aa)) are Periplasmic-facing. The interval 64 to 73 (RNTLNRAGTR) is the 3 Arg may form a positively charged pocket, which binds the alpha-carboxyl group of the attractant AA. A helical membrane pass occupies residues 189 to 209 (IWLVAGAVLMLLVVTLSAMWW). Residues 210-536 (LRTMLVQPLN…VKETLDCQTA (327 aa)) are Cytoplasmic-facing. Residues 212–264 (TMLVQPLNIIRGHFERIASGDLSAPIEVYGRNEISQLFASLQRMQQSLIGTVG) enclose the HAMP domain. A Methyl-accepting transducer domain is found at 269 to 498 (GAESILIGLQ…ESASAAAALE (230 aa)). Q293 carries the glutamate methyl ester (Gln) modification. The residue at position 300 (E300) is a Glutamate methyl ester (Glu). Q307 carries the glutamate methyl ester (Gln) modification. Glutamate methyl ester (Glu) is present on residues E489 and E498.

Belongs to the methyl-accepting chemotaxis (MCP) protein family.

The protein resides in the cell inner membrane. Functionally, this protein responds to changes in Asp concentration in the environment, transduces a signal from the outside to the inside of the cell, and facilitates sensory adaptation through various levels of methylation. Its function is as follows. Chemotactic-signal transducers respond to changes in the concentration of attractants and repellents in the environment, transduce a signal from the outside to the inside of the cell, and facilitate sensory adaptation through the variation of the level of methylation. Attractants increase the level of methylation while repellents decrease the level of methylation, the methyl groups are added by the methyltransferase CheR and removed by the methylesterase CheB. The polypeptide is Methyl-accepting chemotaxis aspartate transducer (tas) (Klebsiella aerogenes (strain ATCC 13048 / DSM 30053 / CCUG 1429 / JCM 1235 / KCTC 2190 / NBRC 13534 / NCIMB 10102 / NCTC 10006 / CDC 819-56) (Enterobacter aerogenes)).